A 995-amino-acid chain; its full sequence is S1 RNA-binding domain-containing protein 1 (995 aa).

Residues 23 to 81 (SFSELSSASEEDDKEDSAWEPQKKVPRSRKQPPPKESKPKRMPRVKKNAPQISDGSEVV) form a disordered region. Glycyl lysine isopeptide (Lys-Gly) (interchain with G-Cter in SUMO2) cross-links involve residues K84 and K134. The disordered stretch occupies residues 120-165 (CAAQPHTVRRTKKLKVEEETSKASNLEGESNSSETPSTSTVWGGTC). Residues 146-159 (EGESNSSETPSTST) are compositionally biased toward low complexity. Glycyl lysine isopeptide (Lys-Gly) (interchain with G-Cter in SUMO2) cross-links involve residues K166, K167, and K183. Residue K185 forms a Glycyl lysine isopeptide (Lys-Gly) (interchain with G-Cter in SUMO1); alternate linkage. K185 is covalently cross-linked (Glycyl lysine isopeptide (Lys-Gly) (interchain with G-Cter in SUMO2); alternate). Residues 258–288 (ADSLREVQQTLEELRAVAKKVHSTIQKIKKE) adopt a coiled-coil conformation. S861 carries the phosphoserine modification. In terms of domain architecture, S1 motif spans 919–992 (GTVLTGKVEN…PRSRITLDLI (74 aa)). Residue K955 forms a Glycyl lysine isopeptide (Lys-Gly) (interchain with G-Cter in SUMO2) linkage. At S964 the chain carries Phosphoserine.

The polypeptide is S1 RNA-binding domain-containing protein 1 (SRBD1) (Homo sapiens (Human)).